We begin with the raw amino-acid sequence, 831 residues long: Periplasmic nitrate reductase (831 aa).

The segment at residues 1–38 is a signal peptide (tat-type signal); it reads MSMARRDFIKQTAAAAAATVAGVPLTGYTQNIVTESEA. Residues 41–97 enclose the 4Fe-4S Mo/W bis-MGD-type domain; that stretch reads LKWSKAPCRFCGTGCGVNVAVKDNQVVATHGDFNAEVNKGLNCVKGYFLSKIMYGSD. [4Fe-4S] cluster is bound by residues Cys48, Cys51, Cys55, and Cys83. Mo-bis(molybdopterin guanine dinucleotide) contacts are provided by residues Lys85, Gln152, Asn177, Cys181, 214–221, 245–249, 264–266, Met375, Gln379, Asn485, 511–512, Lys534, Asp561, and 721–730; these read WGSNMAEM, STFEH, QSD, SD, and TGRVLEHWHS. Trp797 serves as a coordination point for substrate. Residues Asn805 and Lys822 each coordinate Mo-bis(molybdopterin guanine dinucleotide).

The protein belongs to the prokaryotic molybdopterin-containing oxidoreductase family. NasA/NapA/NarB subfamily. As to quaternary structure, component of the periplasmic nitrate reductase NapAB complex composed of NapA and NapB. [4Fe-4S] cluster serves as cofactor. Mo-bis(molybdopterin guanine dinucleotide) is required as a cofactor. Predicted to be exported by the Tat system. The position of the signal peptide cleavage has not been experimentally proven.

The protein localises to the periplasm. It catalyses the reaction 2 Fe(II)-[cytochrome] + nitrate + 2 H(+) = 2 Fe(III)-[cytochrome] + nitrite + H2O. Functionally, catalytic subunit of the periplasmic nitrate reductase complex NapAB. Receives electrons from NapB and catalyzes the reduction of nitrate to nitrite. This chain is Periplasmic nitrate reductase, found in Bordetella parapertussis (strain 12822 / ATCC BAA-587 / NCTC 13253).